Here is a 494-residue protein sequence, read N- to C-terminus: Transcription factor SOX-9 (494 aa).

Disordered stretches follow at residues 1–66 and 159–275; these read MNLL…ESDE and ERLR…FRDV. Low complexity predominate over residues 27–42; the sequence is SDDSAGSPCPSGSGSD. Basic and acidic residues-rich tracts occupy residues 56 to 66 and 159 to 174; these read GDPDLKKESDE and ERLR…DYKY. Positions 63–103 are dimerization (DIM); sequence ESDEDKFPVCIREAVSQVLKGYDWTLVPMPVRVNGSSKNKP. A PQA region spans residues 63–103; the sequence is ESDEDKFPVCIREAVSQVLKGYDWTLVPMPVRVNGSSKNKP. S64 is modified (phosphoserine). Residues 105–173 constitute a DNA-binding region (HMG box); the sequence is VKRPMNAFMV…QHKKDHPDYK (69 aa). The residue at position 181 (S181) is a Phosphoserine. Low complexity predominate over residues 211–222; sequence SPQSSSSISEVH. A transactivation domain (TAM) region spans residues 224–309; it reads PGEHSGQSQG…LPPNGHPGVP (86 aa). Short sequence motifs (9aaTAD) lie at residues 277-286 and 292-300; these read IGELSSDVIS and DVNEFDQYL. The span at 326–337 shows a compositional bias: low complexity; it reads SSASSPAGAGHA. The interval 326–402 is disordered; it reads SSASSPAGAG…PQQQQQQQQQ (77 aa). Residues 344–353 show a composition bias toward pro residues; sequence PQPPQPPAQP. The transactivation domain (TAC) stretch occupies residues 372 to 494; the sequence is RPHIKTEQLS…QPVYTQLTRP (123 aa). Residue K376 forms a Glycyl lysine isopeptide (Lys-Gly) (interchain with G-Cter in SUMO) linkage. A compositionally biased stretch (polar residues) spans 378–387; that stretch reads EQLSPSHYSE. A compositionally biased stretch (low complexity) spans 388-402; sequence QQQHSPQQQQQQQQQ. The 9aaTAD 3 motif lies at 445-453; that stretch reads GGLYSTFTY. A disordered region spans residues 462-494; sequence YTPIADTSGVPSIPQTHSPQHWEQPVYTQLTRP. Residues 470-494 show a composition bias toward polar residues; that stretch reads GVPSIPQTHSPQHWEQPVYTQLTRP.

In terms of assembly, interacts with SNAI2; triggers neural crest delamination in a phosphorylation dependent manner. Interacts with UBE2I. In terms of processing, phosphorylated at Ser-181 in the developing neural tube. Phosphorylation at either Ser-64 or Ser-181 is required for sumoylation, but phosphorylation is not dependent on sumoylation. Sumoylation is enhanced by PKA. Phosphorylation is required for interaction with SNAI2 to trigger neural crest delamination and for an efficient trunk neural crest delamination, whereas sumoylation plays a less significant role. Phosphorylation and sumoylation are induced by BMP signaling pathway. Sumoylated at Lys-376; phosphorylation at either Ser-64 or Ser-181 is required for sumoylation. Sumoylation is induced by BMP signaling pathway.

The protein resides in the nucleus. Its function is as follows. Transcription factor that plays a key role in chondrocytes differentiation and skeletal development. Specifically binds the 5'-ACAAAG-3' DNA motif present in enhancers and super-enhancers and promotes expression of genes important for chondrogenesis, including COL2A1. Plays a central role in successive steps of chondrocyte differentiation. Absolutely required for precartilaginous condensation, the first step in chondrogenesis during which skeletal progenitors differentiate into prechondrocytes. Together with SOX5 and SOX6, required for overt chondrogenesis when condensed prechondrocytes differentiate into early stage chondrocytes, the second step in chondrogenesis. Later, required to direct hypertrophic maturation and block osteoblast differentiation of growth plate chondrocytes: maintains chondrocyte columnar proliferation, delays prehypertrophy and then prevents osteoblastic differentiation of chondrocytes. Also required for chondrocyte hypertrophy, both indirectly, by keeping the lineage fate of chondrocytes, and directly, by remaining present in upper hypertrophic cells. Low lipid levels are the main nutritional determinant for chondrogenic commitment of skeletal progenitor cells: when lipids levels are low, FOXO transcription factors promote expression of SOX9, which induces chondrogenic commitment and suppresses fatty acid oxidation. In addition to cartilage development, also acts as a regulator of proliferation and differentiation in epithelial stem/progenitor cells. In response to bone morphogenetic protein stimulus, phosphorylation is induced and then sumoylation, allowing cooperation with SNAI2 to trigger neural crest delamination. In Gallus gallus (Chicken), this protein is Transcription factor SOX-9.